A 367-amino-acid polypeptide reads, in one-letter code: 3-dehydroquinate synthase (367 aa).

Residues 99 to 103 (GVVGD), 123 to 124 (TT), K136, K145, and 163 to 166 (FLRT) contribute to the NAD(+) site. Residues E178, H242, and H259 each contribute to the Zn(2+) site.

The protein belongs to the sugar phosphate cyclases superfamily. Dehydroquinate synthase family. The cofactor is Co(2+). It depends on Zn(2+) as a cofactor. NAD(+) serves as cofactor.

It localises to the cytoplasm. The catalysed reaction is 7-phospho-2-dehydro-3-deoxy-D-arabino-heptonate = 3-dehydroquinate + phosphate. It participates in metabolic intermediate biosynthesis; chorismate biosynthesis; chorismate from D-erythrose 4-phosphate and phosphoenolpyruvate: step 2/7. Functionally, catalyzes the conversion of 3-deoxy-D-arabino-heptulosonate 7-phosphate (DAHP) to dehydroquinate (DHQ). The polypeptide is 3-dehydroquinate synthase (Chlorobaculum parvum (strain DSM 263 / NCIMB 8327) (Chlorobium vibrioforme subsp. thiosulfatophilum)).